We begin with the raw amino-acid sequence, 249 residues long: 2,5-diamino-6-ribosylamino-4(3H)-pyrimidinone 5'-phosphate reductase (249 aa).

NADP(+) is bound by residues Thr79, Asp83, Met164, and 187-191 (GGIVI).

This sequence belongs to the HTP reductase family. In terms of assembly, homodimer.

It catalyses the reaction 2,5-diamino-6-(1-D-ribitylamino)pyrimidin-4(3H)-one 5'-phosphate + NADP(+) = 2,5-diamino-6-(1-D-ribosylamino)pyrimidin-4(3H)-one 5'-phosphate + NADPH + H(+). The enzyme catalyses 2,5-diamino-6-(1-D-ribitylamino)pyrimidin-4(3H)-one 5'-phosphate + NAD(+) = 2,5-diamino-6-(1-D-ribosylamino)pyrimidin-4(3H)-one 5'-phosphate + NADH + H(+). Its pathway is cofactor biosynthesis; riboflavin biosynthesis. Functionally, catalyzes an early step in riboflavin biosynthesis, the NADPH-dependent reduction of the ribose side chain of 2,5-diamino-6-ribosylamino-4(3H)-pyrimidinone 5'-phosphate, yielding 2,5-diamino-6-ribitylamino-4(3H)-pyrimidinone 5'-phosphate. The polypeptide is 2,5-diamino-6-ribosylamino-4(3H)-pyrimidinone 5'-phosphate reductase (RIB7) (Kluyveromyces marxianus (Yeast)).